The chain runs to 296 residues: Protein FAM110A (296 aa).

2 disordered regions span residues N61–G97 and P117–L192. Pro residues-rich tracts occupy residues P139–S148 and P161–S170.

It belongs to the FAM110 family. As to quaternary structure, may interact with CSPP1.

The protein resides in the cytoplasm. It is found in the cytoskeleton. It localises to the microtubule organizing center. The protein localises to the centrosome. Its subcellular location is the spindle pole. This is Protein FAM110A (Fam110a) from Mus musculus (Mouse).